Consider the following 424-residue polypeptide: Fasciclin-like arabinogalactan protein 1 (424 aa).

Positions 1 to 24 are cleaved as a signal peptide; that stretch reads MAKKMSSLIIIFNILLLLTTQTHA. FAS1 domains lie at 25–170 and 184–323; these read HNVT…SRVL and EMNL…DKVL. Residues asparagine 26, asparagine 128, asparagine 160, asparagine 186, and asparagine 240 are each glycosylated (N-linked (GlcNAc...) asparagine). The disordered stretch occupies residues 338-393; sequence APAPAPEDGDVADSPKAAKGKAKGKKKKAAPSPDNDPFGDSDSPAEGPDGEADDAT. A compositionally biased stretch (basic residues) spans 355–366; the sequence is AKGKAKGKKKKA. Aspartate 396 carries GPI-anchor amidated aspartate lipidation. The propeptide at 397 to 424 is removed in mature form; that stretch reads AGAVRIIGGAKAGLVVSLLCLFASSWLL.

Belongs to the fasciclin-like AGP family. In terms of tissue distribution, preferentially expressed in flowers.

The protein localises to the secreted. It is found in the extracellular space. The protein resides in the apoplast. Its subcellular location is the cell membrane. Functionally, may be a cell surface adhesion protein. The chain is Fasciclin-like arabinogalactan protein 1 (FLA1) from Arabidopsis thaliana (Mouse-ear cress).